Here is a 383-residue protein sequence, read N- to C-terminus: Galactokinase (383 aa).

34 to 37 is a substrate binding site; it reads EHTD. An ATP-binding site is contributed by 124-130; sequence GAGLSSS. 2 residues coordinate Mg(2+): serine 130 and glutamate 162. Aspartate 174 (proton acceptor) is an active-site residue. Position 223 (tyrosine 223) interacts with substrate.

It belongs to the GHMP kinase family. GalK subfamily.

The protein resides in the cytoplasm. The catalysed reaction is alpha-D-galactose + ATP = alpha-D-galactose 1-phosphate + ADP + H(+). Its pathway is carbohydrate metabolism; galactose metabolism. Functionally, catalyzes the transfer of the gamma-phosphate of ATP to D-galactose to form alpha-D-galactose-1-phosphate (Gal-1-P). This is Galactokinase from Yersinia pseudotuberculosis serotype IB (strain PB1/+).